The chain runs to 308 residues: Polyketide transferase claH (308 aa).

The segment at 50–280 is abhydrolase domain; sequence SDIAVYFSQQ…RVEVAAGKSH (231 aa).

The protein belongs to the polyketide transferase af380 family.

It functions in the pathway secondary metabolite biosynthesis. Functionally, polyketide transferase; part of the cla gene cluster that produces clavatol and ortho-quinone methide. The clavatol biosynthesis cluster cla and the terrestric acid cluster tra are both involved in the production of peniphenones and penilactones. The non-reducing PKS claF is responsible for the formation of clavatol from successive condensations of 3 malonyl-CoA units, presumably with a simple acetyl-CoA starter unit, and 2 methylation steps. The esterase claE probably collaborates with claF by catalyzing the hydrolysis of ACP-bound acyl intermediates to free the ACP from stalled intermediates. The clavatol oxidase claD then converts clavatol to hydroxyclavatol. Spontaneous dehydration of hydroxyclavatol leads to the accumulation of the highly active ortho-quinone methide. On the other hand, the PKS-NRPS hybrid traA is involved in the formation of crustosic acid, with the help of traB and traD. The polyketide synthase module (PKS) of traA is responsible for the synthesis of the polyketide backbone via the condensation of an acetyl-CoA starter unit with 3 malonyl-CoA units. The downstream nonribosomal peptide synthetase (NRPS) module then amidates the carboxyl end of the polyketide with L-malic acid. Because traA lacks a designated enoylreductase (ER) domain, the required activity is provided the enoyl reductase traG. Crustosic acid undergoes decarboxylation and isomerization to the terrestric acid, catalyzed by the 2-oxoglutarate-dependent dioxygenase traH. Both acids are further converted to the 2 gamma-butyrolactones (R)-5-methyltetronic acid and (S)-5-carboxylmethyltetronic acid, with involvement of the cytochrome P450 monooxygenase claJ. Spontaneous addition of the methide to these gamma-butyrolactones leads to peniphenone D and penilactone D, which undergo again stereospecific attacking by methide to give penilactones A and B. The function of the polyketide transferase claH has not been investigated yet. The polypeptide is Polyketide transferase claH (Penicillium crustosum (Blue mold fungus)).